We begin with the raw amino-acid sequence, 216 residues long: Probable GTP-binding protein EngB (216 aa).

An EngB-type G domain is found at 30–204 (DGLEVAFAGR…HDVLARWLGL (175 aa)). GTP contacts are provided by residues 38–45 (GRSNAGKS), 64–68 (GRTQL), 82–85 (DLPG), 149–152 (TKAD), and 182–185 (LFSA). The Mg(2+) site is built by serine 45 and threonine 66.

Belongs to the TRAFAC class TrmE-Era-EngA-EngB-Septin-like GTPase superfamily. EngB GTPase family. It depends on Mg(2+) as a cofactor.

Functionally, necessary for normal cell division and for the maintenance of normal septation. The polypeptide is Probable GTP-binding protein EngB (Azotobacter vinelandii (strain DJ / ATCC BAA-1303)).